The chain runs to 285 residues: Tryptophan synthase alpha chain (285 aa).

Catalysis depends on proton acceptor residues Glu-53 and Asp-64.

Belongs to the TrpA family. In terms of assembly, tetramer of two alpha and two beta chains.

It carries out the reaction (1S,2R)-1-C-(indol-3-yl)glycerol 3-phosphate + L-serine = D-glyceraldehyde 3-phosphate + L-tryptophan + H2O. It functions in the pathway amino-acid biosynthesis; L-tryptophan biosynthesis; L-tryptophan from chorismate: step 5/5. In terms of biological role, the alpha subunit is responsible for the aldol cleavage of indoleglycerol phosphate to indole and glyceraldehyde 3-phosphate. This Bordetella pertussis (strain Tohama I / ATCC BAA-589 / NCTC 13251) protein is Tryptophan synthase alpha chain.